The primary structure comprises 78 residues: Large ribosomal subunit protein uL23 (78 aa).

This sequence belongs to the universal ribosomal protein uL23 family. Part of the 50S ribosomal subunit. Contacts protein L29.

Its function is as follows. Binds to 23S rRNA. One of the proteins that surrounds the polypeptide exit tunnel on the outside of the ribosome. The polypeptide is Large ribosomal subunit protein uL23 (Nanoarchaeum equitans (strain Kin4-M)).